Consider the following 316-residue polypeptide: MNFSSIFSQLKDPHRLIFICAALLCLTPFMSSPMALVLGFTLASLGWVPKDWNIAALTKKLLSYSIIGLGFGINLTAAIEASSHNLGLIIGSIIFTLILGFIVTRALKFDPITGHLIASGTAICGGSAIAAVAPAVNAKADQTATALACVFVLNSVALFLFPALGHLLNMSQYDFGVWSAIAIHDTSSVVGAASAYGDEALKTATTIKLARALWIIPIALVSALIFGGDKRKLNLPYFIGFYCLAIAIAHWLPQFQPLYNTLFMVSKHTLVLCLFLIGAGITVQKMRASGPKPLLLGVILWMAIGVTSLAYILYFQ.

9 helical membrane passes run 61 to 80, 85 to 107, 114 to 136, 146 to 168, 175 to 197, 207 to 226, 233 to 252, 262 to 281, and 293 to 315; these read LLSY…AAIE, NLGL…TRAL, GHLI…APAV, ALAC…GHLL, FGVW…SAYG, IKLA…ALIF, LNLP…AHWL, LFMV…GAGI, and PLLL…ILYF.

It belongs to the UPF0324 family.

It is found in the cell membrane. The protein is UPF0324 membrane protein SO_4708 of Shewanella oneidensis (strain ATCC 700550 / JCM 31522 / CIP 106686 / LMG 19005 / NCIMB 14063 / MR-1).